Reading from the N-terminus, the 384-residue chain is Cell adhesion molecule CEACAM18 (384 aa).

Residues 1–30 form the signal peptide; that stretch reads MDLSRPRWSLWRRVFLMASLLACGICQASG. Asparagine 108, asparagine 112, asparagine 121, asparagine 162, and asparagine 270 each carry an N-linked (GlcNAc...) asparagine glycan. In terms of domain architecture, Ig-like C2-type spans 227 to 314; it reads PDYVLLRSNP…LIMYMDVRIQ (88 aa). Cysteine 255 and cysteine 296 are oxidised to a cystine. The interval 358–384 is disordered; the sequence is QPLLNQDKSGSMSVHPRPEDKTRRASR. The span at 359 to 369 shows a compositional bias: polar residues; that stretch reads PLLNQDKSGSM. A compositionally biased stretch (basic and acidic residues) spans 373–384; the sequence is PRPEDKTRRASR.

Belongs to the immunoglobulin superfamily. CEA family.

The polypeptide is Cell adhesion molecule CEACAM18 (Homo sapiens (Human)).